The chain runs to 741 residues: uncharacterized protein (741 aa).

The next 5 membrane-spanning stretches (helical) occupy residues 34–54, 76–96, 120–140, 156–176, and 187–207; these read WLLW…LLII, LIIP…FING, LAVL…FVSL, LSVF…LIII, and LLLL…AFSI. Residues 404–423 are compositionally biased toward basic and acidic residues; it reads EAEEKERQEKEEKEKAEKDN. Disordered regions lie at residues 404–473 and 555–647; these read EAEE…FRPR and QKEL…ENAK. Positions 424-439 are enriched in polar residues; that stretch reads GNGQDSNKVNSVSTEP. Composition is skewed to basic and acidic residues over residues 445–465 and 555–573; these read SDAD…DSSK and QKEL…DQKS. The span at 623–643 shows a compositional bias: acidic residues; sequence DNTDESEDKQSEEEEKFDEEI. 2 helical membrane-spanning segments follow: residues 655–675 and 715–735; these read AFFN…ENGA and VIIA…FFAY.

This sequence to M.pneumoniae MPN_333.

The protein localises to the cell membrane. This is an uncharacterized protein from Mycoplasma pneumoniae (strain ATCC 29342 / M129 / Subtype 1) (Mycoplasmoides pneumoniae).